A 227-amino-acid chain; its full sequence is Cytochrome c oxidase subunit 2 (227 aa).

Over 1-14 (MAYPFQLGLQDATS) the chain is Mitochondrial intermembrane. Residues 15-45 (PIMEELTNFHDHTLMIVFLISSLVLYIISLM) form a helical membrane-spanning segment. Over 46 to 59 (LTTKLTHTNTMDAQ) the chain is Mitochondrial matrix. The helical transmembrane segment at 60-87 (EVETIWTILPAVILILIALPSLRILYMM) threads the bilayer. The Mitochondrial intermembrane portion of the chain corresponds to 88–227 (DEINNPALTV…HFENWSASMI (140 aa)). 6 residues coordinate Cu cation: H161, C196, E198, C200, H204, and M207. Position 198 (E198) interacts with Mg(2+).

The protein belongs to the cytochrome c oxidase subunit 2 family. Component of the cytochrome c oxidase (complex IV, CIV), a multisubunit enzyme composed of 14 subunits. The complex is composed of a catalytic core of 3 subunits MT-CO1, MT-CO2 and MT-CO3, encoded in the mitochondrial DNA, and 11 supernumerary subunits COX4I, COX5A, COX5B, COX6A, COX6B, COX6C, COX7A, COX7B, COX7C, COX8 and NDUFA4, which are encoded in the nuclear genome. The complex exists as a monomer or a dimer and forms supercomplexes (SCs) in the inner mitochondrial membrane with NADH-ubiquinone oxidoreductase (complex I, CI) and ubiquinol-cytochrome c oxidoreductase (cytochrome b-c1 complex, complex III, CIII), resulting in different assemblies (supercomplex SCI(1)III(2)IV(1) and megacomplex MCI(2)III(2)IV(2)). Found in a complex with TMEM177, COA6, COX18, COX20, SCO1 and SCO2. Interacts with TMEM177 in a COX20-dependent manner. Interacts with COX20. Interacts with COX16. Cu cation is required as a cofactor.

The protein resides in the mitochondrion inner membrane. The enzyme catalyses 4 Fe(II)-[cytochrome c] + O2 + 8 H(+)(in) = 4 Fe(III)-[cytochrome c] + 2 H2O + 4 H(+)(out). In terms of biological role, component of the cytochrome c oxidase, the last enzyme in the mitochondrial electron transport chain which drives oxidative phosphorylation. The respiratory chain contains 3 multisubunit complexes succinate dehydrogenase (complex II, CII), ubiquinol-cytochrome c oxidoreductase (cytochrome b-c1 complex, complex III, CIII) and cytochrome c oxidase (complex IV, CIV), that cooperate to transfer electrons derived from NADH and succinate to molecular oxygen, creating an electrochemical gradient over the inner membrane that drives transmembrane transport and the ATP synthase. Cytochrome c oxidase is the component of the respiratory chain that catalyzes the reduction of oxygen to water. Electrons originating from reduced cytochrome c in the intermembrane space (IMS) are transferred via the dinuclear copper A center (CU(A)) of subunit 2 and heme A of subunit 1 to the active site in subunit 1, a binuclear center (BNC) formed by heme A3 and copper B (CU(B)). The BNC reduces molecular oxygen to 2 water molecules using 4 electrons from cytochrome c in the IMS and 4 protons from the mitochondrial matrix. This is Cytochrome c oxidase subunit 2 (MT-CO2) from Sundamys muelleri (Mueller's giant sunda rat).